The primary structure comprises 164 residues: ATP synthase subunit b 2 (164 aa).

The chain crosses the membrane as a helical span at residues 4-24; sequence TFWAFVGLVLFLALLVYFEVP.

This sequence belongs to the ATPase B chain family. In terms of assembly, F-type ATPases have 2 components, F(1) - the catalytic core - and F(0) - the membrane proton channel. F(1) has five subunits: alpha(3), beta(3), gamma(1), delta(1), epsilon(1). F(0) has three main subunits: a(1), b(2) and c(10-14). The alpha and beta chains form an alternating ring which encloses part of the gamma chain. F(1) is attached to F(0) by a central stalk formed by the gamma and epsilon chains, while a peripheral stalk is formed by the delta and b chains.

The protein localises to the cell inner membrane. F(1)F(0) ATP synthase produces ATP from ADP in the presence of a proton or sodium gradient. F-type ATPases consist of two structural domains, F(1) containing the extramembraneous catalytic core and F(0) containing the membrane proton channel, linked together by a central stalk and a peripheral stalk. During catalysis, ATP synthesis in the catalytic domain of F(1) is coupled via a rotary mechanism of the central stalk subunits to proton translocation. In terms of biological role, component of the F(0) channel, it forms part of the peripheral stalk, linking F(1) to F(0). The protein is ATP synthase subunit b 2 of Bartonella henselae (strain ATCC 49882 / DSM 28221 / CCUG 30454 / Houston 1) (Rochalimaea henselae).